An 81-amino-acid chain; its full sequence is Conotoxin Im6.1 (81 aa).

The first 20 residues, 1 to 20 (MSKLGVVLFTLLLLVPLVTP), serve as a signal peptide directing secretion. A propeptide spanning residues 21–47 (ERDGGKWTMLAKNKKAMKRNLMDFITR) is cleaved from the precursor. Intrachain disulfides connect C49–C61, C54–C67, and C60–C76.

Belongs to the conotoxin M superfamily. Expressed by the venom duct.

The protein resides in the secreted. The chain is Conotoxin Im6.1 from Conus imperialis (Imperial cone).